Here is a 683-residue protein sequence, read N- to C-terminus: Transforming growth factor-beta-induced protein ig-h3 (683 aa).

An N-terminal signal peptide occupies residues 1–23; it reads MALLGRLLPLALALALGPAATHA. Residue S37 is modified to Phosphoserine. In terms of domain architecture, EMI spans 45–99; it reads GPNVCAVQKLIGTNKKYFTNCKQWYQRKICGKSTVISYECCPGYEKVPGEKGCPA. 5 cysteine pairs are disulfide-bonded: C49–C85, C74–C339, C84–C97, C214–C317, and C473–C478. C65 carries the S-cysteinyl cysteine modification. FAS1 domains are found at residues 103 to 236, 240 to 371, 375 to 498, and 502 to 632; these read LSNL…DKVI, TNNI…DELL, SAKT…DRML, and MGTV…NTVL. Residues 642–644 carry the Cell attachment site motif; the sequence is RGD.

Binds to type I, II, and IV collagens. Gamma-carboxyglutamated; gamma-carboxyglutamate residues are formed by vitamin K dependent carboxylation; these residues may be required for binding to calcium. According to a report, does not contain any vitamin K-dependent gamma-carboxyglutamate residues. Post-translationally, the EMI domain contains 2 expected intradomain disulfide bridges (Cys-49-Cys85 and Cys-84-Cys-97) and one unusual interdomain disulfide bridge to the second FAS1 domain (Cys-74-Cys-339). This arrangement violates the predicted disulfide bridge pattern of an EMI domain. In terms of tissue distribution, widely distributed in various tissues except for the brain. High levels in corneal epithelium.

The protein resides in the secreted. Its subcellular location is the extracellular space. It localises to the extracellular matrix. Its function is as follows. Plays a role in cell adhesion. May play a role in cell-collagen interactions. The protein is Transforming growth factor-beta-induced protein ig-h3 (TGFBI) of Sus scrofa (Pig).